We begin with the raw amino-acid sequence, 343 residues long: Phosphoribosylformylglycinamidine cyclo-ligase (343 aa).

The protein belongs to the AIR synthase family.

It localises to the cytoplasm. The enzyme catalyses 2-formamido-N(1)-(5-O-phospho-beta-D-ribosyl)acetamidine + ATP = 5-amino-1-(5-phospho-beta-D-ribosyl)imidazole + ADP + phosphate + H(+). It functions in the pathway purine metabolism; IMP biosynthesis via de novo pathway; 5-amino-1-(5-phospho-D-ribosyl)imidazole from N(2)-formyl-N(1)-(5-phospho-D-ribosyl)glycinamide: step 2/2. The chain is Phosphoribosylformylglycinamidine cyclo-ligase from Staphylococcus epidermidis (strain ATCC 35984 / DSM 28319 / BCRC 17069 / CCUG 31568 / BM 3577 / RP62A).